Consider the following 474-residue polypeptide: UDP-glycosyltransferase 71C2 (474 aa).

UDP-alpha-D-glucose-binding positions include Ser293, 352–354 (APQ), 369–377 (HCGWNSILE), and 391–394 (YAEQ).

Belongs to the UDP-glycosyltransferase family.

Its function is as follows. Possesses low quercetin 3-O-glucosyltransferase, 7-O-glucosyltransferase and 3'-O-glucosyltransferase activities in vitro. Glucosylates other secondary metabolites in vitro like vanillin, trans-resveratrol, curumin and etoposide. The polypeptide is UDP-glycosyltransferase 71C2 (UGT71C2) (Arabidopsis thaliana (Mouse-ear cress)).